The chain runs to 194 residues: MRDNNNNNTREEERSSSSKQQQPQAPMSLKIIDSCLRLSVVPLSVATIWLTVTNHESNPDYGNLEYNSIMGLKYMVGVSAISAIYALLSTVSSWVTCLVSKAWLFFIPDQVLAYVMTTSVAGATEIVYLLNKGDKIVTWSEMCSSYPHYCSKLTIALGLHVFVLFFFLFLSVISAYRAFSPFDPPCDSQTNNDA.

Residues 1–16 are compositionally biased toward basic and acidic residues; that stretch reads MRDNNNNNTREEERSS. The tract at residues 1–26 is disordered; the sequence is MRDNNNNNTREEERSSSSKQQQPQAP. Topologically, residues 1 to 30 are cytoplasmic; that stretch reads MRDNNNNNTREEERSSSSKQQQPQAPMSLK. Residues 31–51 traverse the membrane as a helical segment; that stretch reads IIDSCLRLSVVPLSVATIWLT. At 52–74 the chain is on the extracellular side; sequence VTNHESNPDYGNLEYNSIMGLKY. The helical transmembrane segment at 75 to 95 threads the bilayer; the sequence is MVGVSAISAIYALLSTVSSWV. Residues 96-110 are Cytoplasmic-facing; sequence TCLVSKAWLFFIPDQ. Residues 111-133 traverse the membrane as a helical segment; that stretch reads VLAYVMTTSVAGATEIVYLLNKG. At 134–152 the chain is on the extracellular side; that stretch reads DKIVTWSEMCSSYPHYCSK. The helical transmembrane segment at 153–173 threads the bilayer; sequence LTIALGLHVFVLFFFLFLSVI. Topologically, residues 174 to 194 are cytoplasmic; the sequence is SAYRAFSPFDPPCDSQTNNDA.

It belongs to the Casparian strip membrane proteins (CASP) family. In terms of assembly, homodimer and heterodimers.

Its subcellular location is the cell membrane. In Arabidopsis thaliana (Mouse-ear cress), this protein is CASP-like protein 2D1.